Consider the following 665-residue polypeptide: Methionine--tRNA ligase (665 aa).

The 'HIGH' region motif lies at 16–26 (YYPSGKAHIGH). A 'KMSKS' region motif is present at residues 311–315 (KMSKS). ATP is bound at residue Lys314. A tRNA-binding domain is found at 564–665 (DFDKIDLRVA…SALPNGAKVK (102 aa)).

This sequence belongs to the class-I aminoacyl-tRNA synthetase family. MetG type 2B subfamily. As to quaternary structure, homodimer.

The protein localises to the cytoplasm. It carries out the reaction tRNA(Met) + L-methionine + ATP = L-methionyl-tRNA(Met) + AMP + diphosphate. Functionally, is required not only for elongation of protein synthesis but also for the initiation of all mRNA translation through initiator tRNA(fMet) aminoacylation. The sequence is that of Methionine--tRNA ligase from Listeria monocytogenes serotype 4b (strain F2365).